A 209-amino-acid chain; its full sequence is Glycerol-3-phosphate acyltransferase (209 aa).

Transmembrane regions (helical) follow at residues 8–28 (NVLFYITAYLVGGIPFGYILA), 78–98 (VLVLIAKLLGFPPATWWLIGI), 124–144 (VLLVLLPVETIIGIVTWLIVA), 149–169 (ISSLSSLSGLVALVVASFIVH), and 170–190 (PDMPYVHSHAPLLLLAFIIFY).

This sequence belongs to the PlsY family. Probably interacts with PlsX.

Its subcellular location is the cell inner membrane. The enzyme catalyses an acyl phosphate + sn-glycerol 3-phosphate = a 1-acyl-sn-glycero-3-phosphate + phosphate. Its pathway is lipid metabolism; phospholipid metabolism. Catalyzes the transfer of an acyl group from acyl-phosphate (acyl-PO(4)) to glycerol-3-phosphate (G3P) to form lysophosphatidic acid (LPA). This enzyme utilizes acyl-phosphate as fatty acyl donor, but not acyl-CoA or acyl-ACP. This chain is Glycerol-3-phosphate acyltransferase, found in Nitratiruptor sp. (strain SB155-2).